A 94-amino-acid chain; its full sequence is Large ribosomal subunit protein bL25 (94 aa).

The protein belongs to the bacterial ribosomal protein bL25 family. In terms of assembly, part of the 50S ribosomal subunit; part of the 5S rRNA/L5/L18/L25 subcomplex. Contacts the 5S rRNA. Binds to the 5S rRNA independently of L5 and L18.

This is one of the proteins that binds to the 5S RNA in the ribosome where it forms part of the central protuberance. This chain is Large ribosomal subunit protein bL25, found in Cronobacter sakazakii (strain ATCC BAA-894) (Enterobacter sakazakii).